Reading from the N-terminus, the 348-residue chain is Probable dual-specificity RNA methyltransferase RlmN (348 aa).

Catalysis depends on Glu89, which acts as the Proton acceptor. The 236-residue stretch at 95–330 (ERDHYTLCVS…NFVRFSKGVE (236 aa)) folds into the Radical SAM core domain. Cys102 and Cys335 are joined by a disulfide. [4Fe-4S] cluster contacts are provided by Cys109, Cys113, and Cys116. Residues 157-158 (GE), Ser189, 214-216 (SLN), and Asn292 each bind S-adenosyl-L-methionine. Cys335 functions as the S-methylcysteine intermediate in the catalytic mechanism.

Belongs to the radical SAM superfamily. RlmN family. Requires [4Fe-4S] cluster as cofactor.

The protein localises to the cytoplasm. It carries out the reaction adenosine(2503) in 23S rRNA + 2 reduced [2Fe-2S]-[ferredoxin] + 2 S-adenosyl-L-methionine = 2-methyladenosine(2503) in 23S rRNA + 5'-deoxyadenosine + L-methionine + 2 oxidized [2Fe-2S]-[ferredoxin] + S-adenosyl-L-homocysteine. It catalyses the reaction adenosine(37) in tRNA + 2 reduced [2Fe-2S]-[ferredoxin] + 2 S-adenosyl-L-methionine = 2-methyladenosine(37) in tRNA + 5'-deoxyadenosine + L-methionine + 2 oxidized [2Fe-2S]-[ferredoxin] + S-adenosyl-L-homocysteine. Specifically methylates position 2 of adenine 2503 in 23S rRNA and position 2 of adenine 37 in tRNAs. This chain is Probable dual-specificity RNA methyltransferase RlmN, found in Aquifex aeolicus (strain VF5).